The chain runs to 267 residues: tRNA pseudouridine synthase A (267 aa).

Aspartate 51 functions as the Nucleophile in the catalytic mechanism. Tyrosine 109 lines the substrate pocket.

This sequence belongs to the tRNA pseudouridine synthase TruA family. Homodimer.

It catalyses the reaction uridine(38/39/40) in tRNA = pseudouridine(38/39/40) in tRNA. Its function is as follows. Formation of pseudouridine at positions 38, 39 and 40 in the anticodon stem and loop of transfer RNAs. The polypeptide is tRNA pseudouridine synthase A (Staphylococcus carnosus (strain TM300)).